The chain runs to 165 residues: Thiol peroxidase (165 aa).

The 148-residue stretch at 18–165 folds into the Thioredoxin domain; it reads PQVGDNLAEF…DYDAALAALN (148 aa). C60 functions as the Cysteine sulfenic acid (-SOH) intermediate in the catalytic mechanism. A disulfide bridge links C60 with C94.

It belongs to the peroxiredoxin family. Tpx subfamily. In terms of assembly, homodimer.

The enzyme catalyses a hydroperoxide + [thioredoxin]-dithiol = an alcohol + [thioredoxin]-disulfide + H2O. In terms of biological role, thiol-specific peroxidase that catalyzes the reduction of hydrogen peroxide and organic hydroperoxides to water and alcohols, respectively. Plays a role in cell protection against oxidative stress by detoxifying peroxides. The sequence is that of Thiol peroxidase from Corynebacterium glutamicum (strain ATCC 13032 / DSM 20300 / JCM 1318 / BCRC 11384 / CCUG 27702 / LMG 3730 / NBRC 12168 / NCIMB 10025 / NRRL B-2784 / 534).